The primary structure comprises 90 residues: Small ribosomal subunit protein uS15c (90 aa).

The protein belongs to the universal ribosomal protein uS15 family. In terms of assembly, part of the 30S ribosomal subunit.

It localises to the plastid. It is found in the chloroplast. This Buxus microphylla (Littleleaf boxwood) protein is Small ribosomal subunit protein uS15c (rps15).